We begin with the raw amino-acid sequence, 567 residues long: Glutamate--tRNA ligase (567 aa).

A 'HIGH' region motif is present at residues 106–116 (PNPDGPLHLGN).

Belongs to the class-I aminoacyl-tRNA synthetase family. Glutamate--tRNA ligase type 2 subfamily.

Its subcellular location is the cytoplasm. The enzyme catalyses tRNA(Glu) + L-glutamate + ATP = L-glutamyl-tRNA(Glu) + AMP + diphosphate. In terms of biological role, catalyzes the attachment of glutamate to tRNA(Glu) in a two-step reaction: glutamate is first activated by ATP to form Glu-AMP and then transferred to the acceptor end of tRNA(Glu). This Sulfolobus acidocaldarius (strain ATCC 33909 / DSM 639 / JCM 8929 / NBRC 15157 / NCIMB 11770) protein is Glutamate--tRNA ligase.